Consider the following 230-residue polypeptide: Ureidoacrylate amidohydrolase RutB (230 aa).

Aspartate 24 serves as the catalytic Proton acceptor. Lysine 133 is an active-site residue. Catalysis depends on cysteine 166, which acts as the Nucleophile.

This sequence belongs to the isochorismatase family. RutB subfamily.

It carries out the reaction (Z)-3-ureidoacrylate + H2O + H(+) = (Z)-3-aminoacrylate + NH4(+) + CO2. It catalyses the reaction (Z)-3-ureidoacrylate + H2O = (Z)-3-aminoacrylate + carbamate + H(+). The enzyme catalyses (Z)-2-methylureidoacrylate + H2O + H(+) = (Z)-2-methylaminoacrylate + NH4(+) + CO2. Its function is as follows. Hydrolyzes ureidoacrylate to form aminoacrylate and carbamate. The carbamate hydrolyzes spontaneously, thereby releasing one of the nitrogen atoms of the pyrimidine ring as ammonia and one of its carbon atoms as CO2. This Escherichia coli O6:K15:H31 (strain 536 / UPEC) protein is Ureidoacrylate amidohydrolase RutB.